The primary structure comprises 701 residues: MAQDVLTDLNKVRNIGIMAHIDAGKTTTTERILYYTGVNYKIGETHDGASTTDWMEQEQERGITITSAAVTCFWNGNQINIIDTPGHVDFTVEVERSLRVLDGAVAVFDGKEGVEPQSEQVWRQADKYDVPRICFVNKMDKLGADFYFTVQTIKDRLGAKPLVIQLPIGAENDFEGIIDLVEMNAKVWRGETKLGESYETVEIPADLADKAAEYRNELLETVAESDEALLEKYLGGEELSIDEIKAGIRKLTVASELYPVLCGSAFKNKGVQPMLDAVIDYLPSPLDVESVKGHVPGHEDQEIERKPSTDEPFSALAFKIAVHPFFGKLTYVRVYSGKIESGAQVVNATKGKKERLGKLFQMHANKENPVETAAAGHIYAVIGLKDTTTGDTLCDPNSQIVLESMTFPDPVIEVAIEPKTKTDQEKLGTAIQKLAEEDPTFKVKLDQETGQTVIGGMGELHLDILVDRMRREFKVEANVGKPQVAYRETIRKKVENVEFTHKKQTGGSGQFAKVIVTVEPLVDAEDGATYEFENKVTGGRVPREYIPSVDAGAQDAMQYGILAGYPLVNIKVTLLDGAYHDVDSSEMAFKIAGSQALKKAAQAAQPVILEPLMAVEVITPEDYMGDVIGDLNSRRGQIQAMEERSGARVVKAQVPLSEMFGYVGDLRSKTQGRANYSMVFDSYAEVPANVSKEIIAKATGE.

A tr-type G domain is found at 10 to 286 (NKVRNIGIMA…AVIDYLPSPL (277 aa)). GTP-binding positions include 19 to 26 (AHIDAGKT), 83 to 87 (DTPGH), and 137 to 140 (NKMD).

Belongs to the TRAFAC class translation factor GTPase superfamily. Classic translation factor GTPase family. EF-G/EF-2 subfamily.

The protein localises to the cytoplasm. Its function is as follows. Catalyzes the GTP-dependent ribosomal translocation step during translation elongation. During this step, the ribosome changes from the pre-translocational (PRE) to the post-translocational (POST) state as the newly formed A-site-bound peptidyl-tRNA and P-site-bound deacylated tRNA move to the P and E sites, respectively. Catalyzes the coordinated movement of the two tRNA molecules, the mRNA and conformational changes in the ribosome. The sequence is that of Elongation factor G from Mycobacteroides abscessus (strain ATCC 19977 / DSM 44196 / CCUG 20993 / CIP 104536 / JCM 13569 / NCTC 13031 / TMC 1543 / L948) (Mycobacterium abscessus).